The chain runs to 143 residues: Hemoglobin subunit alpha-1 (143 aa).

Ser-2 carries the N-acetylserine modification. In terms of domain architecture, Globin spans 2–143 (SLSAKDKATV…LALALCEKYR (142 aa)). Residue His-60 participates in O2 binding. Position 89 (His-89) interacts with heme b.

The protein belongs to the globin family. As to quaternary structure, hb 1 is a heterotetramer of two alpha-1 and two beta-1 chains. In terms of tissue distribution, red blood cells.

Its function is as follows. Involved in oxygen transport from gills to the various peripheral tissues. This chain is Hemoglobin subunit alpha-1 (hba1), found in Boreogadus saida (Polar cod).